A 1035-amino-acid chain; its full sequence is FACT complex subunit SPT16 (1035 aa).

Residues 432 to 500 (FLKKEDEEEE…AKRRLTEQKG (69 aa)) adopt a coiled-coil conformation. Disordered stretches follow at residues 491–520 (AKRR…ASQV) and 920–1035 (EQGG…KRKK). Residues 499–519 (KGGQQTMKARKSNVSYKNASQ) are compositionally biased toward polar residues. The segment covering 929 to 985 (PDGEGSDAAEGDSESELDDETFNPSEDEEEEEEDSDEDYSDETEDSVDSEESADSEE) has biased composition (acidic residues). Over residues 986 to 1006 (ESGKDWDELEEEARKADRESL) the composition is skewed to basic and acidic residues.

The protein belongs to the peptidase M24 family. SPT16 subfamily. Component of the FACT complex (also called the DUF complex), a stable heterodimer of ssrp1 and supt16h. May also be a component of a ck2-spt16-ssrp1 complex composed of ssrp1, supt16h, csnk2a1, csnk2a2 and csnk2b. The FACT complex may also interact with vcp.

The protein resides in the nucleus. Its subcellular location is the chromosome. Component of the FACT complex, a general chromatin factor that acts to reorganize nucleosomes. The FACT complex is involved in multiple processes that require DNA as a template such as mRNA elongation, DNA replication and DNA repair. During transcription elongation the FACT complex acts as a histone chaperone that both destabilizes and restores nucleosomal structure. It facilitates the passage of RNA polymerase II and transcription by promoting the dissociation of one histone H2A-H2B dimer from the nucleosome, then subsequently promotes the reestablishment of the nucleosome following the passage of RNA polymerase II. This chain is FACT complex subunit SPT16 (supt16h), found in Xenopus laevis (African clawed frog).